The primary structure comprises 185 residues: Gastrokine-1 (185 aa).

A signal peptide spans 1-20 (MKFTIVFAGLLGVFLAPALA). The 97-residue stretch at 54-150 (NNGWDSWNSI…MCRGIPTYMA (97 aa)) folds into the BRICHOS domain. An intrachain disulfide couples cysteine 81 to cysteine 142.

It belongs to the gastrokine family. Expressed in stomach (at protein level). No expression is detected in cancer tissue or gastric cancer cell lines.

It is found in the secreted. It localises to the cytoplasmic granule. The protein localises to the golgi apparatus. Functionally, has mitogenic activity and may be involved in maintaining the integrity of the gastric mucosal epithelium. In Homo sapiens (Human), this protein is Gastrokine-1 (GKN1).